The primary structure comprises 488 residues: Cobyric acid synthase (488 aa).

Residues 255–442 (ALKIAVPVLP…LHGLFGSDAY (188 aa)) enclose the GATase cobBQ-type domain. C337 (nucleophile) is an active-site residue. Residue H434 is part of the active site.

It belongs to the CobB/CobQ family. CobQ subfamily.

The protein operates within cofactor biosynthesis; adenosylcobalamin biosynthesis. Functionally, catalyzes amidations at positions B, D, E, and G on adenosylcobyrinic A,C-diamide. NH(2) groups are provided by glutamine, and one molecule of ATP is hydrogenolyzed for each amidation. The sequence is that of Cobyric acid synthase from Rhizobium johnstonii (strain DSM 114642 / LMG 32736 / 3841) (Rhizobium leguminosarum bv. viciae).